The following is a 309-amino-acid chain: MKKLGTLLVLFLSAIILVACASGKKDTTSGQKLKVVATNSIIADITKNIAGDKIDLHSIVPIGQDPHEYEPLPEDVKKTSEADLIFYNGINLETGGNAWFTKLVENAKKTENKDYFAVSDGVDVIYLEGQNEKGKEDPHAWLNLENGIIFAKNIAKQLSAKDPNNKEFYEKNLKEYTDKLDKLDKESKDKFNKIPAEKKLIVTSEGAFKYFSKAYGVPSAYIWEINTEEEGTPEQIKTLVEKLRQTKVPSLFVESSVDDRPMKTVSQDTNIPIYAQIFTDSIAEQGKEGDSYYSMMKYNLDKIAEGLAK.

The first 19 residues, 1 to 19 (MKKLGTLLVLFLSAIILVA), serve as a signal peptide directing secretion. The N-palmitoyl cysteine moiety is linked to residue C20. The S-diacylglycerol cysteine moiety is linked to residue C20. Mn(2+)-binding residues include H67, H139, E205, and D280.

The protein belongs to the bacterial solute-binding protein 9 family. Lipoprotein receptor antigen (Lrai) subfamily.

It localises to the cell membrane. In terms of biological role, part of the ATP-binding cassette (ABC) transport system PsaABC involved in manganese import. Binds manganese with high affinity and specificity and delivers it to the membrane permease for translocation into the cytoplasm. Also acts as an adhesin which is involved on adherence to extracellular matrix. It is an important factor in pathogenesis and infection. In Streptococcus pneumoniae serotype 4 (strain ATCC BAA-334 / TIGR4), this protein is Manganese ABC transporter substrate-binding lipoprotein PsaA (psaA).